Consider the following 383-residue polypeptide: Succinyl-diaminopimelate desuccinylase (383 aa).

Zn(2+) is bound at residue H73. Residue D75 is part of the active site. D107 is a Zn(2+) binding site. The active-site Proton acceptor is the E141. Positions 142, 170, and 356 each coordinate Zn(2+).

Belongs to the peptidase M20A family. DapE subfamily. Homodimer. It depends on Zn(2+) as a cofactor. The cofactor is Co(2+).

It carries out the reaction N-succinyl-(2S,6S)-2,6-diaminopimelate + H2O = (2S,6S)-2,6-diaminopimelate + succinate. The protein operates within amino-acid biosynthesis; L-lysine biosynthesis via DAP pathway; LL-2,6-diaminopimelate from (S)-tetrahydrodipicolinate (succinylase route): step 3/3. Functionally, catalyzes the hydrolysis of N-succinyl-L,L-diaminopimelic acid (SDAP), forming succinate and LL-2,6-diaminopimelate (DAP), an intermediate involved in the bacterial biosynthesis of lysine and meso-diaminopimelic acid, an essential component of bacterial cell walls. This is Succinyl-diaminopimelate desuccinylase from Pseudomonas paraeruginosa (strain DSM 24068 / PA7) (Pseudomonas aeruginosa (strain PA7)).